We begin with the raw amino-acid sequence, 244 residues long: tRNA pseudouridine synthase B (244 aa).

The active-site Nucleophile is the Asp46.

Belongs to the pseudouridine synthase TruB family. Type 1 subfamily.

It carries out the reaction uridine(55) in tRNA = pseudouridine(55) in tRNA. Its function is as follows. Responsible for synthesis of pseudouridine from uracil-55 in the psi GC loop of transfer RNAs. This chain is tRNA pseudouridine synthase B, found in Bordetella avium (strain 197N).